The following is a 354-amino-acid chain: L-lactate dehydrogenase (354 aa).

NAD(+)-binding positions include 73-78 (DAVPDK) and Arg-120. Residues Arg-127, Asn-159, and Arg-190 each coordinate substrate. Asn-159 is an NAD(+) binding site. The Proton acceptor role is filled by His-214. Substrate is bound at residue Thr-269. The interval 302 to 332 (HGIPDGTTSSSACPPRRPRRRPGRREMELTE) is disordered.

The protein belongs to the LDH/MDH superfamily. LDH family. Homotetramer.

It catalyses the reaction (S)-lactate + NAD(+) = pyruvate + NADH + H(+). Its pathway is fermentation; pyruvate fermentation to lactate; (S)-lactate from pyruvate: step 1/1. The chain is L-lactate dehydrogenase from Zea mays (Maize).